A 412-amino-acid polypeptide reads, in one-letter code: Mannose-6-phosphate isomerase (412 aa).

4 residues coordinate Zn(2+): glutamine 99, histidine 101, glutamate 126, and histidine 265. Residue arginine 284 is part of the active site.

The protein belongs to the mannose-6-phosphate isomerase type 1 family. The cofactor is Zn(2+).

It is found in the cytoplasm. It localises to the nucleus. It catalyses the reaction D-mannose 6-phosphate = D-fructose 6-phosphate. It participates in nucleotide-sugar biosynthesis; GDP-alpha-D-mannose biosynthesis; alpha-D-mannose 1-phosphate from D-fructose 6-phosphate: step 1/2. Its function is as follows. Involved in the synthesis of the GDP-mannose and dolichol-phosphate-mannose required for a number of critical mannosyl transfer reactions. This is Mannose-6-phosphate isomerase (pmi40) from Schizosaccharomyces pombe (strain 972 / ATCC 24843) (Fission yeast).